A 164-amino-acid polypeptide reads, in one-letter code: Putative lung carcinoma-associated protein 10 (164 aa).

A disordered region spans residues 1 to 164 (MSSCPVHDCP…TQKPQTTVGQ (164 aa)). Low complexity predominate over residues 23–40 (GSRGALRLRGGAPGSAAG). Over residues 152–164 (MQKTQKPQTTVGQ) the composition is skewed to polar residues.

The chain is Putative lung carcinoma-associated protein 10 (LCA10) from Homo sapiens (Human).